We begin with the raw amino-acid sequence, 171 residues long: S-ribosylhomocysteine lyase (171 aa).

Fe cation-binding residues include H54, H58, and C128.

The protein belongs to the LuxS family. Homodimer. Fe cation is required as a cofactor.

It catalyses the reaction S-(5-deoxy-D-ribos-5-yl)-L-homocysteine = (S)-4,5-dihydroxypentane-2,3-dione + L-homocysteine. In terms of biological role, involved in the synthesis of autoinducer 2 (AI-2) which is secreted by bacteria and is used to communicate both the cell density and the metabolic potential of the environment. The regulation of gene expression in response to changes in cell density is called quorum sensing. Catalyzes the transformation of S-ribosylhomocysteine (RHC) to homocysteine (HC) and 4,5-dihydroxy-2,3-pentadione (DPD). The chain is S-ribosylhomocysteine lyase from Photorhabdus laumondii subsp. laumondii (strain DSM 15139 / CIP 105565 / TT01) (Photorhabdus luminescens subsp. laumondii).